Here is a 118-residue protein sequence, read N- to C-terminus: Ribonuclease P protein component (118 aa).

It belongs to the RnpA family. As to quaternary structure, consists of a catalytic RNA component (M1 or rnpB) and a protein subunit.

It catalyses the reaction Endonucleolytic cleavage of RNA, removing 5'-extranucleotides from tRNA precursor.. Functionally, RNaseP catalyzes the removal of the 5'-leader sequence from pre-tRNA to produce the mature 5'-terminus. It can also cleave other RNA substrates such as 4.5S RNA. The protein component plays an auxiliary but essential role in vivo by binding to the 5'-leader sequence and broadening the substrate specificity of the ribozyme. The chain is Ribonuclease P protein component from Shewanella putrefaciens (strain CN-32 / ATCC BAA-453).